The chain runs to 406 residues: Immediate early response gene 5-like protein (406 aa).

Disordered stretches follow at residues 166 to 195 (QPPH…APAA) and 216 to 235 (AAPS…PSSS). Over residues 182 to 193 (QPGPAPLPPPAP) the composition is skewed to pro residues.

The protein belongs to the IER family.

The chain is Immediate early response gene 5-like protein (Ier5l) from Mus musculus (Mouse).